The sequence spans 578 residues: NADPH oxidase 4 (578 aa).

The Cytoplasmic portion of the chain corresponds to 1–16 (MAVSWRSWLANEGVKH). A helical membrane pass occupies residues 17 to 37 (LCLFIWLSMNVLLFWKTFLLY). Topologically, residues 38-62 (NQGPEYHYLHQMLGLGLCLSRASAS) are extracellular. The Ferric oxidoreductase domain occupies 58–303 (RASASVLNLN…YCAERLYRYI (246 aa)). A helical transmembrane segment spans residues 63 to 83 (VLNLNCSLILLPMCRTLLAYL). The Cytoplasmic portion of the chain corresponds to 84–103 (RGSQKVPSRRTRRLLDKSRT). A helical transmembrane segment spans residues 104–124 (FHITCGVTICIFSGVHVAAHL). At 125-154 (VNALNFSVNYSEDFVELNAARYRDEDPRKL) the chain is on the extracellular side. Residue asparagine 133 is glycosylated (N-linked (GlcNAc...) asparagine). A helical membrane pass occupies residues 155–175 (LFTTVPGLTGVCMVVVLFLMI). Residues 176-188 (TASTYAIRVSNYD) lie on the Cytoplasmic side of the membrane. The helical transmembrane segment at 189 to 209 (IFWYTHNLFFVFYMLLTLHVS) threads the bilayer. Residues 210 to 424 (GGLLKYQTNL…SPFEESLNYE (215 aa)) lie on the Extracellular side of the membrane. Residues 218–273 (NLDTHPPGCISLNRTSSQNISLPEYFSEHFHEPFPEGFSKPAEFTQHKFVKICMEE) form an E-loop; essential for H2O2 generating catalytic activity region. Residue asparagine 230 is glycosylated (N-linked (GlcNAc...) asparagine). The segment at 248-575 (HEPFPEGFSK…YGTRFEYNKE (328 aa)) is mediates interaction with TLR4. The region spanning 304–419 (RSNKPVTIIS…DGPFGSPFEE (116 aa)) is the FAD-binding FR-type domain. Residues 425–445 (VSLCVAGGIGVTPFASILNTL) traverse the membrane as a helical segment. Residues 446–578 (LDDWKPYKLR…RFEYNKESFS (133 aa)) are Cytoplasmic-facing.

In terms of assembly, interacts with protein disulfide isomerase. Interacts with, relocalizes and stabilizes CYBA/p22phox. Interacts with TLR4. Interacts with PPP1R15A. Interacts with LRRC8A; this interaction prevents the ubiquitin-mediated degradation of LRRC8A. Heme serves as cofactor. Deubiquitinated by USP19. Post-translationally, N-glycosylated and glycosylation is required for its proper function. In terms of processing, N-glycosylated. As to expression, expressed by distal tubular cells in kidney cortex and in endothelial cells (at protein level). Widely expressed. Strongly expressed in kidney and to a lower extent in heart, adipocytes, hepatoma, endothelial cells, skeletal muscle, brain, several brain tumor cell lines and airway epithelial cells.

The protein resides in the cytoplasm. The protein localises to the endoplasmic reticulum membrane. It is found in the cell membrane. Its subcellular location is the cell junction. It localises to the focal adhesion. The protein resides in the nucleus. The protein localises to the nucleolus. It is found in the perinuclear region. It catalyses the reaction NADPH + 2 O2 = 2 superoxide + NADP(+) + H(+). The catalysed reaction is NADPH + O2 + H(+) = H2O2 + NADP(+). Its activity is regulated as follows. Inhibited by plumbagin. Activated by phorbol 12-myristate 13-acetate (PMA). Activated by insulin. Inhibited by diphenylene iodonium. Functionally, NADPH oxidase that catalyzes predominantly the reduction of oxygen to H2O2. Can also catalyze to a smaller extent, the reduction of oxygen to superoxide. May function as an oxygen sensor regulating the KCNK3/TASK-1 potassium channel and HIF1A activity. May regulate insulin signaling cascade. May play a role in apoptosis, bone resorption and lipolysaccharide-mediated activation of NFKB. May produce superoxide in the nucleus and play a role in regulating gene expression upon cell stimulation. Promotes ferroptosis, reactive oxygen species production and reduced glutathione (GSH) levels by activating NLRP3 inflammasome activation and cytokine release. Its function is as follows. NADPH oxidase that catalyzes the generation of superoxide from molecular oxygen utilizing NADPH as an electron donor. Involved in redox signaling in vascular cells. Modulates the nuclear activation of ERK1/2 and the ELK1 transcription factor, and is capable of inducing nuclear DNA damage. Lacks superoxide-generating NADPH oxidase activity. The sequence is that of NADPH oxidase 4 (NOX4) from Homo sapiens (Human).